Here is a 446-residue protein sequence, read N- to C-terminus: tRNA-2-methylthio-N(6)-dimethylallyladenosine synthase (446 aa).

An MTTase N-terminal domain is found at 3-124; the sequence is KKLYIKTYGC…LPELISKVVR (122 aa). 6 residues coordinate [4Fe-4S] cluster: Cys-12, Cys-48, Cys-87, Cys-162, Cys-166, and Cys-169. The Radical SAM core domain maps to 148 to 380; it reads YPQGASAFIS…QKELSSQQLA (233 aa). The TRAM domain occupies 383–446; the sequence is ESCVGSTMKV…SNSLTGEIYT (64 aa).

Belongs to the methylthiotransferase family. MiaB subfamily. Monomer. [4Fe-4S] cluster serves as cofactor.

The protein localises to the cytoplasm. It catalyses the reaction N(6)-dimethylallyladenosine(37) in tRNA + (sulfur carrier)-SH + AH2 + 2 S-adenosyl-L-methionine = 2-methylsulfanyl-N(6)-dimethylallyladenosine(37) in tRNA + (sulfur carrier)-H + 5'-deoxyadenosine + L-methionine + A + S-adenosyl-L-homocysteine + 2 H(+). In terms of biological role, catalyzes the methylthiolation of N6-(dimethylallyl)adenosine (i(6)A), leading to the formation of 2-methylthio-N6-(dimethylallyl)adenosine (ms(2)i(6)A) at position 37 in tRNAs that read codons beginning with uridine. The chain is tRNA-2-methylthio-N(6)-dimethylallyladenosine synthase from Rickettsia canadensis (strain McKiel).